The chain runs to 104 residues: Large ribosomal subunit protein bL21 (104 aa).

The protein belongs to the bacterial ribosomal protein bL21 family. Part of the 50S ribosomal subunit. Contacts protein L20.

This protein binds to 23S rRNA in the presence of protein L20. This chain is Large ribosomal subunit protein bL21, found in Tropheryma whipplei (strain TW08/27) (Whipple's bacillus).